Here is a 77-residue protein sequence, read N- to C-terminus: U8-lycotoxin-Ls1r (77 aa).

Residues 1 to 20 (MKLIIFTGLVLFAIVSLIEA) form the signal peptide. Positions 21–26 (QAENEK) are excised as a propeptide.

Belongs to the neurotoxin 19 (CSTX) family. 08 (U8-Lctx) subfamily. Post-translationally, contains 4 disulfide bonds. As to expression, expressed by the venom gland.

The protein localises to the secreted. In Lycosa singoriensis (Wolf spider), this protein is U8-lycotoxin-Ls1r.